A 456-amino-acid polypeptide reads, in one-letter code: Signal transduction histidine-protein kinase ArlS (456 aa).

The next 2 helical transmembrane spans lie at 13–33 (LITT…IIFF) and 157–177 (IVAL…SYIF). An HAMP domain is found at 179 to 232 (SQITKPIVTMSNKMNQIRRDGFQNKLELTTNYEETDNLIDTFNEMMYQIEESFN). In terms of domain architecture, Histidine kinase spans 240–456 (DASHELRTPL…TFKISFPVLN (217 aa)). Residue H243 is modified to Phosphohistidine; by autocatalysis.

In terms of processing, autophosphorylated.

The protein resides in the cell membrane. The enzyme catalyses ATP + protein L-histidine = ADP + protein N-phospho-L-histidine.. Member of the two-component regulatory system ArlS/ArlR. ArlS probably functions as a sensor protein kinase which is autophosphorylated at a histidine residue and transfers its phosphate group to ArlR. The chain is Signal transduction histidine-protein kinase ArlS (arlS) from Staphylococcus epidermidis (strain ATCC 35984 / DSM 28319 / BCRC 17069 / CCUG 31568 / BM 3577 / RP62A).